We begin with the raw amino-acid sequence, 94 residues long: Cytochrome c-551 (94 aa).

The N-terminal stretch at 1 to 14 (MAFTAMTVAPSALA) is a signal peptide. Residues cysteine 24, cysteine 27, histidine 28, and methionine 73 each contribute to the heme c site.

Post-translationally, binds 1 heme c group covalently per subunit.

Efficiently couple electron transfer between the cytochrome bc1 complex and the photosynthetic reaction center. The sequence is that of Cytochrome c-551 from Allochromatium vinosum (strain ATCC 17899 / DSM 180 / NBRC 103801 / NCIMB 10441 / D) (Chromatium vinosum).